The primary structure comprises 547 residues: Sodium-coupled neutral amino acid transporter 4 (547 aa).

At 1–104 the chain is on the extracellular side; sequence MDPIELRSVN…GLSYAMANTG (104 aa). The residue at position 49 (S49) is a Phosphoserine. Residues 105–125 form a helical membrane-spanning segment; that stretch reads IVLFVIMLLTVAILSLYSVHL. At 126 to 151 the chain is on the cytoplasmic side; the sequence is LLKTAKEGGSLIYEKLGEKAFGWPGK. Residues 152-172 form a helical membrane-spanning segment; it reads IGAFISITMQNIGAMSSYLFI. Topologically, residues 173–195 are extracellular; it reads IKYELPEVIRVFMGLEENTGEWY. The helical transmembrane segment at 196 to 216 threads the bilayer; that stretch reads LNGNYLVLFVSVGIILPLSLL. The Cytoplasmic portion of the chain corresponds to 217 to 220; the sequence is KNLG. Residues 221–241 form a helical membrane-spanning segment; that stretch reads YLGYTSGFSLTCMVFFVSVVI. At 242 to 332 the chain is on the extracellular side; sequence YKKFQIPCPL…PKYFVFNSRT (91 aa). C249 and C321 are disulfide-bonded. 3 N-linked (GlcNAc...) asparagine glycosylation sites follow: N260, N264, and N276. Residues 333 to 353 form a helical membrane-spanning segment; sequence AYAIPILAFAFVCHPEVLPIY. The Cytoplasmic portion of the chain corresponds to 354–369; the sequence is SELKDRSRRKMQTVSN. A helical transmembrane segment spans residues 370 to 390; sequence ISITGMLVMYLLAALFGYLSF. Residues 391 to 411 lie on the Extracellular side of the membrane; it reads YGEVEDELLHAYSKVYTFDTA. Residues 412–432 form a helical membrane-spanning segment; it reads LLMVRLAVLVAVTLTVPIVLF. Over 433 to 453 the chain is Cytoplasmic; the sequence is PIRTSVITLLFPRRPFSWVKH. A helical transmembrane segment spans residues 454-474; it reads FGIAAIIIALNNVLVILVPTI. Residues 475–476 lie on the Extracellular side of the membrane; sequence KY. A helical transmembrane segment spans residues 477–497; sequence IFGFIGASSATMLIFILPAAF. Over 498 to 514 the chain is Cytoplasmic; that stretch reads YLKLVKKEPLRSPQKIG. Residues 515-535 form a helical membrane-spanning segment; sequence ALVFLVTGIIFMMGSMALIII. The Extracellular portion of the chain corresponds to 536 to 547; the sequence is DWIYNPPNPDHH.

The protein belongs to the amino acid/polyamine transporter 2 family. The disulfide bond plays an important role in substrate transport, but has no effect on trafficking to the cell surface. Expressed predominantly in liver, and at lower level in skeletal muscle.

It is found in the cell membrane. The protein resides in the cell projection. It localises to the microvillus membrane. It carries out the reaction L-alanine(in) + Na(+)(in) = L-alanine(out) + Na(+)(out). The catalysed reaction is L-serine(in) + Na(+)(in) = L-serine(out) + Na(+)(out). It catalyses the reaction glycine(in) + Na(+)(in) = glycine(out) + Na(+)(out). The enzyme catalyses L-cysteine(in) + Na(+)(in) = L-cysteine(out) + Na(+)(out). It carries out the reaction L-asparagine(in) + Na(+)(in) = L-asparagine(out) + Na(+)(out). The catalysed reaction is L-threonine(in) + Na(+)(in) = L-threonine(out) + Na(+)(out). It catalyses the reaction L-proline(in) + Na(+)(in) = L-proline(out) + Na(+)(out). The enzyme catalyses L-methionine(in) + Na(+)(in) = L-methionine(out) + Na(+)(out). It carries out the reaction L-glutamine(in) + Na(+)(in) = L-glutamine(out) + Na(+)(out). The catalysed reaction is L-histidine(in) + Na(+)(in) = L-histidine(out) + Na(+)(out). In terms of biological role, symporter that cotransports neutral amino acids and sodium ions from the extraccellular to the intracellular side of the cell membrane. The transport is electrogenic, pH dependent and partially tolerates substitution of Na(+) by Li(+). Preferentially transports smaller amino acids, such as glycine, L-alanine, L-serine, L-asparagine and L-threonine, followed by L-cysteine, L-histidine, L-proline and L-glutamine and L-methionine. The polypeptide is Sodium-coupled neutral amino acid transporter 4 (Rattus norvegicus (Rat)).